A 272-amino-acid chain; its full sequence is MSQVVQSRRLRAIDIGKRKAEGRKIIALTAYHAHTAGIVDPYCDFILVGDSLGMVMHGMESTIPVTLEMMILQAQAVIRGTEKALVVVDMPFGSYEASREQAFLNASRVLKETGAGAIKMEGGAHFAETVAFLVQRGVPVMGHIGLTPQAVNTMGGFKVQGRGPDDERRLLEDARAISEAGAFAIVLEGIVEPVARAIASSPRVTAATIGIGASAVCDGQILVLEDMLGLSERTPKFVRQFGSLRTHIEDAVKAYADEVRAGRFPADDHTYG.

Residues Asp50 and Asp89 each contribute to the Mg(2+) site. Residues 50–51 (DS), Asp89, and Lys119 each bind 3-methyl-2-oxobutanoate. Glu121 lines the Mg(2+) pocket. The active-site Proton acceptor is the Glu188.

Belongs to the PanB family. As to quaternary structure, homodecamer; pentamer of dimers. It depends on Mg(2+) as a cofactor.

The protein localises to the cytoplasm. The catalysed reaction is 3-methyl-2-oxobutanoate + (6R)-5,10-methylene-5,6,7,8-tetrahydrofolate + H2O = 2-dehydropantoate + (6S)-5,6,7,8-tetrahydrofolate. It functions in the pathway cofactor biosynthesis; (R)-pantothenate biosynthesis; (R)-pantoate from 3-methyl-2-oxobutanoate: step 1/2. Functionally, catalyzes the reversible reaction in which hydroxymethyl group from 5,10-methylenetetrahydrofolate is transferred onto alpha-ketoisovalerate to form ketopantoate. The polypeptide is 3-methyl-2-oxobutanoate hydroxymethyltransferase (Methylobacterium radiotolerans (strain ATCC 27329 / DSM 1819 / JCM 2831 / NBRC 15690 / NCIMB 10815 / 0-1)).